Here is a 41-residue protein sequence, read N- to C-terminus: Large ribosomal subunit protein bL36 (41 aa).

It belongs to the bacterial ribosomal protein bL36 family.

The chain is Large ribosomal subunit protein bL36 from Nitrobacter hamburgensis (strain DSM 10229 / NCIMB 13809 / X14).